A 191-amino-acid polypeptide reads, in one-letter code: Photosystem I assembly protein Ycf4 (191 aa).

2 consecutive transmembrane segments (helical) span residues 34-54 (VASM…SSYF) and 68-88 (IFVP…LLAI).

This sequence belongs to the Ycf4 family.

Its subcellular location is the cellular thylakoid membrane. Seems to be required for the assembly of the photosystem I complex. The polypeptide is Photosystem I assembly protein Ycf4 (Prochlorococcus marinus (strain NATL1A)).